The chain runs to 239 residues: UDP-2,3-diacylglucosamine hydrolase (239 aa).

Mn(2+) contacts are provided by Asp-8, His-10, Asp-41, Asn-78, and His-113. 78-79 serves as a coordination point for substrate; that stretch reads NR. Positions 121, 159, 163, 166, and 194 each coordinate substrate. Mn(2+) is bound by residues His-194 and His-196.

The protein belongs to the LpxH family. Mn(2+) is required as a cofactor.

The protein localises to the cell inner membrane. It carries out the reaction UDP-2-N,3-O-bis[(3R)-3-hydroxytetradecanoyl]-alpha-D-glucosamine + H2O = 2-N,3-O-bis[(3R)-3-hydroxytetradecanoyl]-alpha-D-glucosaminyl 1-phosphate + UMP + 2 H(+). The protein operates within glycolipid biosynthesis; lipid IV(A) biosynthesis; lipid IV(A) from (3R)-3-hydroxytetradecanoyl-[acyl-carrier-protein] and UDP-N-acetyl-alpha-D-glucosamine: step 4/6. Functionally, hydrolyzes the pyrophosphate bond of UDP-2,3-diacylglucosamine to yield 2,3-diacylglucosamine 1-phosphate (lipid X) and UMP by catalyzing the attack of water at the alpha-P atom. Involved in the biosynthesis of lipid A, a phosphorylated glycolipid that anchors the lipopolysaccharide to the outer membrane of the cell. This chain is UDP-2,3-diacylglucosamine hydrolase, found in Shewanella sp. (strain MR-4).